Here is a 501-residue protein sequence, read N- to C-terminus: Cytochrome P450 7A1 (501 aa).

Residues Ile-4–Leu-24 form a helical membrane-spanning segment. Cys-441 is a heme binding site.

It belongs to the cytochrome P450 family. Heme is required as a cofactor. Detected in liver.

The protein resides in the endoplasmic reticulum membrane. Its subcellular location is the microsome membrane. The enzyme catalyses cholesterol + reduced [NADPH--hemoprotein reductase] + O2 = 7alpha-hydroxycholesterol + oxidized [NADPH--hemoprotein reductase] + H2O + H(+). It carries out the reaction 4beta-hydroxycholesterol + reduced [NADPH--hemoprotein reductase] + O2 = 4beta,7alpha-dihydroxycholesterol + oxidized [NADPH--hemoprotein reductase] + H2O + H(+). It catalyses the reaction lathosterol + reduced [NADPH--hemoprotein reductase] + O2 = 7alpha,8alpha-epoxy-5alpha-cholestan-3beta-ol + oxidized [NADPH--hemoprotein reductase] + H2O + H(+). The catalysed reaction is lathosterol + reduced [NADPH--hemoprotein reductase] + O2 = 5alpha-cholestan-7-oxo-3beta-ol + oxidized [NADPH--hemoprotein reductase] + H2O + H(+). The enzyme catalyses 7-dehydrocholesterol + reduced [NADPH--hemoprotein reductase] + O2 = 7-oxocholesterol + oxidized [NADPH--hemoprotein reductase] + H2O + H(+). It carries out the reaction (24S)-hydroxycholesterol + reduced [NADPH--hemoprotein reductase] + O2 = (24S)-7alpha-dihydroxycholesterol + oxidized [NADPH--hemoprotein reductase] + H2O + H(+). It catalyses the reaction (24R)-hydroxycholesterol + reduced [NADPH--hemoprotein reductase] + O2 = (24R)-7alpha-dihydroxycholesterol + oxidized [NADPH--hemoprotein reductase] + H2O + H(+). It participates in lipid metabolism; bile acid biosynthesis. It functions in the pathway steroid metabolism; cholesterol degradation. A cytochrome P450 monooxygenase involved in the metabolism of endogenous cholesterol and its oxygenated derivatives (oxysterols). Mechanistically, uses molecular oxygen inserting one oxygen atom into a substrate, and reducing the second into a water molecule, with two electrons provided by NADPH via cytochrome P450 reductase (CPR; NADPH-ferrihemoprotein reductase). Functions as a critical regulatory enzyme of bile acid biosynthesis and cholesterol homeostasis. Catalyzes the hydroxylation of carbon hydrogen bond at 7-alpha position of cholesterol, a rate-limiting step in cholesterol catabolism and bile acid biosynthesis. 7-alpha hydroxylates several oxysterols, including 4beta-hydroxycholesterol and 24-hydroxycholesterol. Catalyzes the oxidation of the 7,8 double bond of 7-dehydrocholesterol and lathosterol with direct and predominant formation of the 7-keto derivatives. The protein is Cytochrome P450 7A1 (CYP7A1) of Oryctolagus cuniculus (Rabbit).